Consider the following 398-residue polypeptide: Phosphoglycerate kinase (398 aa).

Residues 21-23 (DIN), Arg-36, 59-62 (HFGR), Arg-118, and Arg-151 contribute to the substrate site. ATP contacts are provided by residues Lys-201, Glu-323, and 353-356 (GGDT).

It belongs to the phosphoglycerate kinase family. As to quaternary structure, monomer.

The protein localises to the cytoplasm. It carries out the reaction (2R)-3-phosphoglycerate + ATP = (2R)-3-phospho-glyceroyl phosphate + ADP. It functions in the pathway carbohydrate degradation; glycolysis; pyruvate from D-glyceraldehyde 3-phosphate: step 2/5. The chain is Phosphoglycerate kinase from Ruegeria pomeroyi (strain ATCC 700808 / DSM 15171 / DSS-3) (Silicibacter pomeroyi).